The sequence spans 182 residues: 5-formyltetrahydrofolate cyclo-ligase (182 aa).

A disordered region spans residues 1-21 (MIRQRRRALTPEQQQEMGQQA). Over residues 11–21 (PEQQQEMGQQA) the composition is skewed to polar residues. Residues 128–135 (GMGGGFYD) and aspartate 167 contribute to the ATP site.

This sequence belongs to the 5-formyltetrahydrofolate cyclo-ligase family.

It catalyses the reaction (6S)-5-formyl-5,6,7,8-tetrahydrofolate + ATP = (6R)-5,10-methenyltetrahydrofolate + ADP + phosphate. It participates in one-carbon metabolism; tetrahydrofolate interconversion. Its function is as follows. Involved in the removal of 5-formyltetrahydrofolate. In vitro, it is a potent inhibitor of various folate-dependent enzymes in the C1 metabolism network and in vivo it might function as a folate storage. 5-formyltetrahydrofolate is also used as an antifolate rescue agent in cancer chemotherapy. Catalyzes the irreversible ATP-dependent transformation of 5-formyltetrahydrofolate (5-CHO-THF) to form 5,10-methenyltetrahydrofolate (5,10-CH=THF). The reverse reaction is catalyzed by the serine hydroxymethyltransferase GlyA (SHMT). The sequence is that of 5-formyltetrahydrofolate cyclo-ligase (ygfA) from Escherichia coli O157:H7.